A 299-amino-acid polypeptide reads, in one-letter code: GTP cyclohydrolase FolE2 (299 aa).

The disordered stretch occupies residues 1–25; that stretch reads MKTKQWPSKTERHKRFGSVPPVAGK.

It belongs to the GTP cyclohydrolase IV family.

The catalysed reaction is GTP + H2O = 7,8-dihydroneopterin 3'-triphosphate + formate + H(+). Its pathway is cofactor biosynthesis; 7,8-dihydroneopterin triphosphate biosynthesis; 7,8-dihydroneopterin triphosphate from GTP: step 1/1. Its function is as follows. Converts GTP to 7,8-dihydroneopterin triphosphate. The chain is GTP cyclohydrolase FolE2 from Halalkalibacterium halodurans (strain ATCC BAA-125 / DSM 18197 / FERM 7344 / JCM 9153 / C-125) (Bacillus halodurans).